The sequence spans 3169 residues: FRAS1-related extracellular matrix protein 2 (3169 aa).

A disordered region spans residues 1-24; that stretch reads MHSAGTPGLSSRRTGNSTSFQPGP. The first 46 residues, 1–46, serve as a signal peptide directing secretion; the sequence is MHSAGTPGLSSRRTGNSTSFQPGPPPPPRLLLLLLLLLSLVSRVPA. Positions 8–21 are enriched in polar residues; that stretch reads GLSSRRTGNSTSFQ. Topologically, residues 47-3113 are extracellular; that stretch reads QPAAFGRALL…SPSSAVSLVT (3067 aa). CSPG repeat units follow at residues 319 to 413, 438 to 537, 560 to 675, 700 to 807, 828 to 919, 945 to 1037, 1066 to 1168, 1189 to 1282, 1303 to 1399, 1420 to 1512, 1532 to 1621, and 1655 to 1752; these read KPSF…LELE, APVV…LRMV, PPVL…FRVQ, PPEL…FQVE, QPPE…LEVS, HPTG…LSLS, APEI…FRCS, EQPE…IKLT, TPRM…FDVT, VFPD…FQVT, KKPV…FTVT, and VPQI…FAVE. Asn358 carries N-linked (GlcNAc...) asparagine glycosylation. Asn1244 and Asn1369 each carry an N-linked (GlcNAc...) asparagine glycan. N-linked (GlcNAc...) asparagine glycans are attached at residues Asn1584 and Asn1741. Calx-beta domains lie at 1759–1858, 1871–1982, 1997–2103, 2118–2220, and 2238–2342; these read LTYQ…VVLS, ATVE…VLLS, QVTI…LVLR, VSIN…LVLG, and TLIR…VHLK. Positions 3036 to 3057 are disordered; sequence SLVSQGKPQSTTKSRKKREIRS. Residues 3037-3047 are compositionally biased toward polar residues; the sequence is LVSQGKPQSTT. A helical membrane pass occupies residues 3114–3134; it reads VVGGTTVGLLTICLTVIAVLM. At 3135-3169 the chain is on the cytoplasmic side; sequence CRGKESFRGKDAPKGSSSSEPMVPPQSHHNDSSEV. The interval 3141 to 3169 is disordered; sequence FRGKDAPKGSSSSEPMVPPQSHHNDSSEV.

This sequence belongs to the FRAS1 family. In terms of assembly, interacts with FREM1.

The protein localises to the cell membrane. Its function is as follows. Extracellular matrix protein required for maintenance of the integrity of the skin epithelium and for maintenance of renal epithelia. Required for epidermal adhesion. Involved in the development of eyelids and the anterior segment of the eyeballs. This chain is FRAS1-related extracellular matrix protein 2 (FREM2), found in Homo sapiens (Human).